The chain runs to 276 residues: Ribosomal RNA small subunit methyltransferase A (276 aa).

6 residues coordinate S-adenosyl-L-methionine: Asn28, Leu30, Gly55, Glu77, Asp103, and Asn124.

This sequence belongs to the class I-like SAM-binding methyltransferase superfamily. rRNA adenine N(6)-methyltransferase family. RsmA subfamily.

It is found in the cytoplasm. It catalyses the reaction adenosine(1518)/adenosine(1519) in 16S rRNA + 4 S-adenosyl-L-methionine = N(6)-dimethyladenosine(1518)/N(6)-dimethyladenosine(1519) in 16S rRNA + 4 S-adenosyl-L-homocysteine + 4 H(+). Functionally, specifically dimethylates two adjacent adenosines (A1518 and A1519) in the loop of a conserved hairpin near the 3'-end of 16S rRNA in the 30S particle. May play a critical role in biogenesis of 30S subunits. The chain is Ribosomal RNA small subunit methyltransferase A from Agrobacterium fabrum (strain C58 / ATCC 33970) (Agrobacterium tumefaciens (strain C58)).